A 28-amino-acid polypeptide reads, in one-letter code: M-poneritoxin-Dq4b/U1-poneritoxin-Dq4c/U1-poneritoxin-Dq4d (28 aa).

M20 is modified (methionine sulfoxide; in form U1-PONTX-Dq4d). Residue A28 is modified to Alanine amide; in form Dq-1362 and U1-PONTX-Dq4d.

In terms of processing, occurs in 3 forms, M-PONTX-Dq4b has an amidated Ala-28, U1-PONTX-Dq4d has an amidated Ala-28 and an oxidized Met-20, U1-PONTX-Dq4c has no modifications at either Met-20 or Ala-28. Expressed by the venom gland.

It is found in the secreted. M-poneritoxin-Dq4b: this synthetic peptide has antimicrobial activity against Gram-positive bacteria B.amyloliquefacies S499 (MIC=0.1 mM), L.monocytogenes 2231 and S.aureus ATCC 29213, against Gram-negative bacteria P.putida BTP1, P.aeruginosa PaO1 and E.coli ATCC 10536, and against the fungi S.cerevisiae, R.mucilaginosa and C.cucumerinum. Not active against the fungi F.oxysporum and B.cinerea. This chain is M-poneritoxin-Dq4b/U1-poneritoxin-Dq4c/U1-poneritoxin-Dq4d, found in Dinoponera quadriceps (South American ant).